Here is a 234-residue protein sequence, read N- to C-terminus: Zinc transport system ATP-binding protein AdcC (234 aa).

An ABC transporter domain is found at 4 to 234; that stretch reads ITVEDLSFYY…HENGQEVGHA (231 aa). Position 36 to 43 (36 to 43) interacts with ATP; sequence GENGAAKT.

This sequence belongs to the ABC transporter superfamily.

Part of the ATP-driven transport system AdcABC for zinc. Required for transformability. The polypeptide is Zinc transport system ATP-binding protein AdcC (adcC) (Streptococcus pneumoniae (strain ATCC BAA-255 / R6)).